Reading from the N-terminus, the 142-residue chain is Large ribosomal subunit protein uL11 (142 aa).

Belongs to the universal ribosomal protein uL11 family. Part of the ribosomal stalk of the 50S ribosomal subunit. Interacts with L10 and the large rRNA to form the base of the stalk. L10 forms an elongated spine to which L12 dimers bind in a sequential fashion forming a multimeric L10(L12)X complex. Post-translationally, one or more lysine residues are methylated.

In terms of biological role, forms part of the ribosomal stalk which helps the ribosome interact with GTP-bound translation factors. The chain is Large ribosomal subunit protein uL11 from Shewanella loihica (strain ATCC BAA-1088 / PV-4).